A 455-amino-acid polypeptide reads, in one-letter code: Ribulose bisphosphate carboxylase large chain (455 aa).

Lys5 carries the N6,N6,N6-trimethyllysine modification. Residues Asn114 and Thr164 each contribute to the substrate site. Lys166 acts as the Proton acceptor in catalysis. Lys168 provides a ligand contact to substrate. Mg(2+) is bound by residues Lys192, Asp194, and Glu195. Lys192 carries the post-translational modification N6-carboxylysine. The active-site Proton acceptor is the His285. Substrate is bound by residues Arg286, His318, and Ser370.

This sequence belongs to the RuBisCO large chain family. Type I subfamily. As to quaternary structure, heterohexadecamer of 8 large chains and 8 small chains; disulfide-linked. The disulfide link is formed within the large subunit homodimers. Mg(2+) serves as cofactor. In terms of processing, the disulfide bond which can form in the large chain dimeric partners within the hexadecamer appears to be associated with oxidative stress and protein turnover.

It localises to the plastid. The protein localises to the chloroplast. The enzyme catalyses 2 (2R)-3-phosphoglycerate + 2 H(+) = D-ribulose 1,5-bisphosphate + CO2 + H2O. It catalyses the reaction D-ribulose 1,5-bisphosphate + O2 = 2-phosphoglycolate + (2R)-3-phosphoglycerate + 2 H(+). In terms of biological role, ruBisCO catalyzes two reactions: the carboxylation of D-ribulose 1,5-bisphosphate, the primary event in carbon dioxide fixation, as well as the oxidative fragmentation of the pentose substrate in the photorespiration process. Both reactions occur simultaneously and in competition at the same active site. This Lupinus luteus (European yellow lupine) protein is Ribulose bisphosphate carboxylase large chain.